The chain runs to 88 residues: MVKLRLKRCGRKQRAVYRIVAIDVRSRREGRDLRKVGFYDPITNQTYLNLPAILDFLKKGAQPTRTVHDISKKAGIFTELNLNKTKLN.

This sequence belongs to the bacterial ribosomal protein bS16 family.

It is found in the plastid. The protein resides in the chloroplast. The protein is Small ribosomal subunit protein bS16c of Sinapis alba (White mustard).